A 948-amino-acid polypeptide reads, in one-letter code: Peroxisomal ATPase pex6 (948 aa).

695 to 702 is an ATP binding site; it reads GPPGTGKT.

This sequence belongs to the AAA ATPase family. Interacts with PEX1; forming the PEX1-PEX6 AAA ATPase complex, which is composed of a heterohexamer formed by a trimer of PEX1-PEX6 dimers.

It is found in the cytoplasm. Its subcellular location is the cytosol. The protein localises to the peroxisome membrane. It carries out the reaction ATP + H2O = ADP + phosphate + H(+). In terms of biological role, component of the PEX1-PEX6 AAA ATPase complex, a protein dislocase complex that mediates the ATP-dependent extraction of the PEX5 receptor from peroxisomal membranes, an essential step for PEX5 recycling. Specifically recognizes PEX5 monoubiquitinated at 'Cys-6', and pulls it out of the peroxisome lumen through the PEX2-PEX10-PEX12 retrotranslocation channel. Extraction by the PEX1-PEX6 AAA ATPase complex is accompanied by unfolding of the TPR repeats and release of bound cargo from PEX5. In Schizosaccharomyces pombe (strain 972 / ATCC 24843) (Fission yeast), this protein is Peroxisomal ATPase pex6 (pex6).